The chain runs to 430 residues: Rho GTPase-activating protein 2 (430 aa).

The segment at 1 to 36 (MTGLVMMTKGGGCGGGGKGGRRKSTAEEEEEEEQNQ) is disordered. Residues 9–18 (KGGGCGGGGK) are compositionally biased toward gly residues. The CRIB domain occupies 80–93 (IGWPTNVRHITHVT). Residues 125–310 (VSAESMQCSY…TLAEREENAT (186 aa)) form the Rho-GAP domain. The tract at residues 307 to 372 (ENATGSEGYS…HLSRHSTHED (66 aa)) is disordered. Over residues 316–326 (SPSHSSNSQTD) the composition is skewed to low complexity. Residues 347–356 (ECGEEEEVEE) show a composition bias toward acidic residues. A compositionally biased stretch (basic and acidic residues) spans 357–371 (VEQHQEHLSRHSTHE).

Homodimerizes via its Rho-GAP domain and forms a tetrameric complex (2:2) with ARAC1/ROP3, ARAC2/ROP7, ARAC4/ROP2, ARAC5/ROP4, ARAC7/ROP9 or ARAC11/ROP1.

Its function is as follows. Acts as a GTPase activator for the Rac-type GTPase by converting it to an inactive GDP-bound state. In Arabidopsis thaliana (Mouse-ear cress), this protein is Rho GTPase-activating protein 2 (ROPGAP2).